The sequence spans 407 residues: S-adenosylmethionine synthase (407 aa).

An ATP-binding site is contributed by 140 to 145 (GQGSAD).

Belongs to the AdoMet synthase 2 family. The cofactor is Mg(2+).

The enzyme catalyses L-methionine + ATP + H2O = S-adenosyl-L-methionine + phosphate + diphosphate. Its pathway is amino-acid biosynthesis; S-adenosyl-L-methionine biosynthesis; S-adenosyl-L-methionine from L-methionine: step 1/1. Its function is as follows. Catalyzes the formation of S-adenosylmethionine from methionine and ATP. The protein is S-adenosylmethionine synthase of Methanosphaera stadtmanae (strain ATCC 43021 / DSM 3091 / JCM 11832 / MCB-3).